The chain runs to 255 residues: Indole-3-glycerol phosphate synthase (255 aa).

It belongs to the TrpC family.

It carries out the reaction 1-(2-carboxyphenylamino)-1-deoxy-D-ribulose 5-phosphate + H(+) = (1S,2R)-1-C-(indol-3-yl)glycerol 3-phosphate + CO2 + H2O. It functions in the pathway amino-acid biosynthesis; L-tryptophan biosynthesis; L-tryptophan from chorismate: step 4/5. The protein is Indole-3-glycerol phosphate synthase of Streptococcus thermophilus (strain ATCC BAA-491 / LMD-9).